A 265-amino-acid chain; its full sequence is Small ribosomal subunit protein uS2 (265 aa).

A disordered region spans residues 231–265; the sequence is VEEEYEDYEGAEDDYEYDETEYTDSVIPDDEEEAE.

The protein belongs to the universal ribosomal protein uS2 family.

This chain is Small ribosomal subunit protein uS2, found in Trichormus variabilis (strain ATCC 29413 / PCC 7937) (Anabaena variabilis).